The chain runs to 319 residues: Homoserine kinase (319 aa).

ATP is bound at residue 100 to 110 (PLSSGMGSSAS).

This sequence belongs to the GHMP kinase family. Homoserine kinase subfamily.

It localises to the cytoplasm. The enzyme catalyses L-homoserine + ATP = O-phospho-L-homoserine + ADP + H(+). It participates in amino-acid biosynthesis; L-threonine biosynthesis; L-threonine from L-aspartate: step 4/5. Catalyzes the ATP-dependent phosphorylation of L-homoserine to L-homoserine phosphate. The sequence is that of Homoserine kinase from Chloroherpeton thalassium (strain ATCC 35110 / GB-78).